Here is a 120-residue protein sequence, read N- to C-terminus: Photosystem II extrinsic protein U (120 aa).

The first 29 residues, 1–29 (MKRLLSLLTGVLVMTGLLMALIFPQSAYA), serve as a signal peptide directing secretion.

Belongs to the PsbU family. As to quaternary structure, PSII is composed of 1 copy each of membrane proteins PsbA, PsbB, PsbC, PsbD, PsbE, PsbF, PsbH, PsbI, PsbJ, PsbK, PsbL, PsbM, PsbT, PsbX, PsbY, Psb30/Ycf12, peripheral proteins PsbO, CyanoQ (PsbQ), PsbU, PsbV and a large number of cofactors. It forms dimeric complexes.

Its subcellular location is the cellular thylakoid membrane. Its function is as follows. One of the extrinsic, lumenal subunits of photosystem II (PSII). PSII is a light-driven water plastoquinone oxidoreductase, using light energy to abstract electrons from H(2)O, generating a proton gradient subsequently used for ATP formation. The extrinsic proteins stabilize the structure of photosystem II oxygen-evolving complex (OEC), the ion environment of oxygen evolution and protect the OEC against heat-induced inactivation. The chain is Photosystem II extrinsic protein U from Prochlorococcus marinus (strain MIT 9313).